The sequence spans 73 residues: Capsid protein G8P (73 aa).

Positions 1–23 are cleaved as a signal peptide; sequence MKKSLVLKASVAVATLVPMLSFA. Over 24 to 44 the chain is Periplasmic; sequence AEGDDPAKAAFDSLQASATEY. The helical transmembrane segment at 45–65 threads the bilayer; sequence IGYAWAMVVVIVGATIGIKLF. Over 66 to 73 the chain is Cytoplasmic; sequence KKFTSKAS.

This sequence belongs to the inovirus capsid protein family. As to quaternary structure, homomultimerizes. There are several thousands of this protein in the phage capsid.

It is found in the virion. The protein localises to the host membrane. In terms of biological role, self assembles to form a helical capsid wrapping up the viral genomic DNA. The capsid displays a filamentous structure with a length of 760-1950 nm and a width of 6-8 nm. The virion assembly and budding take place at the host inner membrane. The protein is Capsid protein G8P (VIII) of Escherichia coli (Bacteriophage f1).